Here is a 430-residue protein sequence, read N- to C-terminus: Trigger factor (430 aa).

The 86-residue stretch at 165-250 (TDIAIFDFEG…LHQIKTKKIP (86 aa)) folds into the PPIase FKBP-type domain.

This sequence belongs to the FKBP-type PPIase family. Tig subfamily.

The protein localises to the cytoplasm. It carries out the reaction [protein]-peptidylproline (omega=180) = [protein]-peptidylproline (omega=0). Functionally, involved in protein export. Acts as a chaperone by maintaining the newly synthesized protein in an open conformation. Functions as a peptidyl-prolyl cis-trans isomerase. The polypeptide is Trigger factor (Onion yellows phytoplasma (strain OY-M)).